Reading from the N-terminus, the 102-residue chain is Small ribosomal subunit protein uS10 (102 aa).

It belongs to the universal ribosomal protein uS10 family. In terms of assembly, part of the 30S ribosomal subunit.

In terms of biological role, involved in the binding of tRNA to the ribosomes. In Streptococcus thermophilus (strain ATCC BAA-250 / LMG 18311), this protein is Small ribosomal subunit protein uS10.